The sequence spans 195 residues: Imidazoleglycerol-phosphate dehydratase (195 aa).

The protein belongs to the imidazoleglycerol-phosphate dehydratase family.

The protein resides in the cytoplasm. The catalysed reaction is D-erythro-1-(imidazol-4-yl)glycerol 3-phosphate = 3-(imidazol-4-yl)-2-oxopropyl phosphate + H2O. It functions in the pathway amino-acid biosynthesis; L-histidine biosynthesis; L-histidine from 5-phospho-alpha-D-ribose 1-diphosphate: step 6/9. The sequence is that of Imidazoleglycerol-phosphate dehydratase from Pelotomaculum thermopropionicum (strain DSM 13744 / JCM 10971 / SI).